A 106-amino-acid polypeptide reads, in one-letter code: Integration host factor subunit alpha (106 aa).

This sequence belongs to the bacterial histone-like protein family. In terms of assembly, heterodimer of an alpha and a beta chain.

Its function is as follows. This protein is one of the two subunits of integration host factor, a specific DNA-binding protein that functions in genetic recombination as well as in transcriptional and translational control. The polypeptide is Integration host factor subunit alpha (Methylobacterium radiotolerans (strain ATCC 27329 / DSM 1819 / JCM 2831 / NBRC 15690 / NCIMB 10815 / 0-1)).